A 55-amino-acid polypeptide reads, in one-letter code: ATP synthase protein 8 (55 aa).

Residues L4 to L24 form a helical membrane-spanning segment.

It belongs to the ATPase protein 8 family. In terms of assembly, F-type ATPases have 2 components, CF(1) - the catalytic core - and CF(0) - the membrane proton channel.

Its subcellular location is the mitochondrion membrane. Functionally, mitochondrial membrane ATP synthase (F(1)F(0) ATP synthase or Complex V) produces ATP from ADP in the presence of a proton gradient across the membrane which is generated by electron transport complexes of the respiratory chain. F-type ATPases consist of two structural domains, F(1) - containing the extramembraneous catalytic core and F(0) - containing the membrane proton channel, linked together by a central stalk and a peripheral stalk. During catalysis, ATP synthesis in the catalytic domain of F(1) is coupled via a rotary mechanism of the central stalk subunits to proton translocation. Part of the complex F(0) domain. Minor subunit located with subunit a in the membrane. This chain is ATP synthase protein 8 (mt-atp8), found in Polypterus ornatipinnis (Ornate bichir).